The sequence spans 189 residues: Chitin synthase 1 (189 aa).

Belongs to the chitin synthase family.

The protein localises to the cell membrane. The enzyme catalyses [(1-&gt;4)-N-acetyl-beta-D-glucosaminyl](n) + UDP-N-acetyl-alpha-D-glucosamine = [(1-&gt;4)-N-acetyl-beta-D-glucosaminyl](n+1) + UDP + H(+). In terms of biological role, polymerizes chitin, a structural polymer of the cell wall and septum, by transferring the sugar moiety of UDP-GlcNAc to the non-reducing end of the growing chitin polymer. The polypeptide is Chitin synthase 1 (CHS1) (Exophiala exophialae (Black yeast-like fungus)).